The primary structure comprises 788 residues: MKDKSIKVLEFNKIQEILKNYTCTKAAKDIIEDLKPYDSMYEVREHLEETKEAFKLLITKGAPPFEGVYDIRSGISLAEKGSALLPGQLLKIAAVLRCARRFKEYINHKEEEESYRVLENICEGIFSLPKIEEEIFNAIEGEDEIADRASSTLYNIRRSLKEKNYSVRDKINSLVRSYSSYLQENIYTVRGDRYVLPVKAEHKGAVPGLVHDQSSTGATLFIEPMSLVNLNNEIKELMLKEKAEIERILTVLSAKINANITGVKTDANIVWELDFIFAKAKFASEYNCTCPTINDEGIVDIIEGRHPLIDRREVVPISVKLGEEFTSLMITGPNTGGKTVTLKTVGLIHLMAMSGLMIPARENSVISYFNNVFADIGDEQSIEQSLSTFSSHMKNIVEIMDKADENSLVLFDELGAGTDPTEGAALAISILENLRKRGTKIIATTHYSELKAYALRKEGVENASVEFDVETLRPTYRLLIGIPGKSNAFEISKRLGLPDYIIDFARENISNENIRFEELIQNLQEKSIKAQEDARLAENLKLERDKEKKKYEEKLEGLQKVRDNALIDARREAKNIIKEAKEEADKILKDIRQLERMGYSSDARRKLEEERKKLKDKLDSIEEKEIKTVHKGEALKNVKEGDEVLLASINQKVIVLSKPDNKGDVLVQAGIMKITANIKDLRAAKGSNSNNSSSKIKKSKKLNLNLRRVESSVDLRGMDAEEAIYTVDKYLDEAYLGGLGEVTIVHGKGTGVLRKTIMDMLKGHSHVKKYRLGEYGEGGTGVTVVELK.

332–339 (GPNTGGKT) contributes to the ATP binding site. The 76-residue stretch at 713–788 (VDLRGMDAEE…GTGVTVVELK (76 aa)) folds into the Smr domain.

Belongs to the DNA mismatch repair MutS family. MutS2 subfamily. As to quaternary structure, homodimer. Binds to stalled ribosomes, contacting rRNA.

Functionally, endonuclease that is involved in the suppression of homologous recombination and thus may have a key role in the control of bacterial genetic diversity. In terms of biological role, acts as a ribosome collision sensor, splitting the ribosome into its 2 subunits. Detects stalled/collided 70S ribosomes which it binds and splits by an ATP-hydrolysis driven conformational change. Acts upstream of the ribosome quality control system (RQC), a ribosome-associated complex that mediates the extraction of incompletely synthesized nascent chains from stalled ribosomes and their subsequent degradation. Probably generates substrates for RQC. The chain is Endonuclease MutS2 from Clostridium botulinum (strain ATCC 19397 / Type A).